A 448-amino-acid polypeptide reads, in one-letter code: MSTFIGQLIGFAVIVFLVVKYVVPPVRTLMAKQQDAVRQQLADSKTAADKLVEAEGAHAKAIEDAKADAAQIAEEAKADAVQISKQLREQADAEVERIKVHGQEQIVLQRQQLIRQLRGDLGAESVRRAGDLVRSHVADPSAQSATVDRFLDELSQMAGSVGAAKRPVPGGYSGMHAASRESLAAQVSTFRETAASLDSSALSALAEDIAAVAELLISELVLRKHLSEPVDASENEAKLTLVNSLLGNKIGAPALAIVRSAVTARWSASSDLITSLEYIARLALLERAERDGQIEDVEDQLFRVSRVLDAEPQLATLLSDSTAPAQGRVALLTNVLGGRANEVTTALLAQTVRLLYSVRAEVAVLDVAELAVARRDESVAHVKAAAPITDAQRTRLAQVLGQIYGRTIAVQLDVDPELLGGLVVNIGDEEIDGSLSTRLSAAALHLPN.

The tract at residues 1-168 (MSTFIGQLIG…GSVGAAKRPV (168 aa)) is ATP synthase subunit b. Residues 4-24 (FIGQLIGFAVIVFLVVKYVVP) form a helical membrane-spanning segment. The interval 169–448 (PGGYSGMHAA…LSAAALHLPN (280 aa)) is ATP synthase subunit delta.

The protein in the N-terminal section; belongs to the ATPase B chain family. This sequence in the C-terminal section; belongs to the ATPase delta chain family. As to quaternary structure, F-type ATPases have 2 components, F(1) - the catalytic core - and F(0) - the membrane proton channel. F(1) has five subunits: alpha(3), beta(3), gamma(1), delta(1), epsilon(1). F(0) has three main subunits: a(1), b(2) and c(10-14). The alpha and beta chains form an alternating ring which encloses part of the gamma chain. F(1) is attached to F(0) by a central stalk formed by the gamma and epsilon chains, while a peripheral stalk is formed by the delta and b chains.

Its subcellular location is the cell membrane. F(1)F(0) ATP synthase produces ATP from ADP in the presence of a proton or sodium gradient. F-type ATPases consist of two structural domains, F(1) containing the extramembraneous catalytic core and F(0) containing the membrane proton channel, linked together by a central stalk and a peripheral stalk. During catalysis, ATP synthesis in the catalytic domain of F(1) is coupled via a rotary mechanism of the central stalk subunits to proton translocation. In terms of biological role, this fusion protein includes a component of the F(0) channel (subunit b) and of the F(1) subunit (subunit delta). Two copies of subunit b and one of delta together form the peripheral 'stator' stalk which links F(1) to F(0). In Mycobacteroides abscessus (strain ATCC 19977 / DSM 44196 / CCUG 20993 / CIP 104536 / JCM 13569 / NCTC 13031 / TMC 1543 / L948) (Mycobacterium abscessus), this protein is ATP synthase subunit b-delta (atpFH).